Here is a 397-residue protein sequence, read N- to C-terminus: Succinate--CoA ligase [ADP-forming] subunit beta (397 aa).

Residues 9–254 form the ATP-grasp domain; it reads KELLRGYGAP…TSEEDEKEIE (246 aa). ATP contacts are provided by residues lysine 46, 53-55, glutamate 109, alanine 112, and glutamate 117; that span reads GRG. Positions 209 and 223 each coordinate Mg(2+). Substrate is bound by residues asparagine 274 and 331–333; that span reads GIM.

This sequence belongs to the succinate/malate CoA ligase beta subunit family. In terms of assembly, heterotetramer of two alpha and two beta subunits. Mg(2+) serves as cofactor.

The catalysed reaction is succinate + ATP + CoA = succinyl-CoA + ADP + phosphate. It carries out the reaction GTP + succinate + CoA = succinyl-CoA + GDP + phosphate. It functions in the pathway carbohydrate metabolism; tricarboxylic acid cycle; succinate from succinyl-CoA (ligase route): step 1/1. In terms of biological role, succinyl-CoA synthetase functions in the citric acid cycle (TCA), coupling the hydrolysis of succinyl-CoA to the synthesis of either ATP or GTP and thus represents the only step of substrate-level phosphorylation in the TCA. The beta subunit provides nucleotide specificity of the enzyme and binds the substrate succinate, while the binding sites for coenzyme A and phosphate are found in the alpha subunit. The chain is Succinate--CoA ligase [ADP-forming] subunit beta from Chelativorans sp. (strain BNC1).